Consider the following 261-residue polypeptide: Short-chain dehydrogenase/reductase ARMGADRAFT_1018421 (261 aa).

NADP(+) contacts are provided by Ile-21, Asp-68, Asn-95, Lys-128, Tyr-161, Lys-165, Val-194, and Thr-196. Tyr-161 serves as the catalytic Proton acceptor. Lys-165 functions as the Lowers pKa of active site Tyr in the catalytic mechanism.

Belongs to the short-chain dehydrogenases/reductases (SDR) family.

It functions in the pathway secondary metabolite biosynthesis. Short-chain dehydrogenase/reductase, part of the gene cluster that mediates the biosynthesis of melleolides, a range of antifungal and phytotoxic polyketide derivatives composed of an orsellinic acid (OA) moiety esterified to various sesquiterpene alcohols. The first step in melleolides biosynthesis is performed by the delta(6)-protoilludene synthase PRO1 which catalyzes the cyclization of farnesyl diphosphate to protoilludene. The orsellinic acid synthase armB produces OA by condensing acetyl-CoA with 3 malonyl-CoA units in a three-round chain elongation reaction folowed by a C2-C7 ring closure. ArmB further catalyzes the trans-esterification of OA to the various sesquiterpene alcohols resulting from the hydroxylation of protoilludene. The melleolides cluster also includes 5 cytochrome P450 monooxygenases, 4 NAD(+)-dependent oxidoreductases, one flavin-dependent oxidoreductase, and one O-methyltransferase. The cytochrome P450 monooxygenases may be involved in protoilludene hydroxylation to elaborate melleolides with multiple alcohol groups, such as melleolide D, which carries alcohol functionalities at C-4, C-5, C-10, and C-13. The role of the NAD(+)-dependent enzymes remains unknown. Numerous melleolides, including arnamial, show 5'-O-methylation of the aromatic moiety which may be catalyzed by the methyltransferase encoded in the cluster. The flavin-dependent oxidoreductase might represent the dehydrogenase yielding the aldehyde in position 1 of arnamial and other melleolides. Finally, several halogenase localized outside of the cluster, are able to catalyze the transfer of a single chlorine atom to the melleolide backbone, resulting in a 6'-chloromelleolide product. This Armillaria gallica (Bulbous honey fungus) protein is Short-chain dehydrogenase/reductase ARMGADRAFT_1018421.